The chain runs to 208 residues: Imidazole glycerol phosphate synthase subunit HisH (208 aa).

The 206-residue stretch at 1-206 folds into the Glutamine amidotransferase type-1 domain; the sequence is MIVIIDYDTG…KEVTESCKSS (206 aa). Cys-79 serves as the catalytic Nucleophile. Active-site residues include His-181 and Glu-183.

Heterodimer of HisH and HisF.

It localises to the cytoplasm. The catalysed reaction is 5-[(5-phospho-1-deoxy-D-ribulos-1-ylimino)methylamino]-1-(5-phospho-beta-D-ribosyl)imidazole-4-carboxamide + L-glutamine = D-erythro-1-(imidazol-4-yl)glycerol 3-phosphate + 5-amino-1-(5-phospho-beta-D-ribosyl)imidazole-4-carboxamide + L-glutamate + H(+). It carries out the reaction L-glutamine + H2O = L-glutamate + NH4(+). It participates in amino-acid biosynthesis; L-histidine biosynthesis; L-histidine from 5-phospho-alpha-D-ribose 1-diphosphate: step 5/9. Functionally, IGPS catalyzes the conversion of PRFAR and glutamine to IGP, AICAR and glutamate. The HisH subunit catalyzes the hydrolysis of glutamine to glutamate and ammonia as part of the synthesis of IGP and AICAR. The resulting ammonia molecule is channeled to the active site of HisF. The polypeptide is Imidazole glycerol phosphate synthase subunit HisH (Listeria innocua serovar 6a (strain ATCC BAA-680 / CLIP 11262)).